A 299-amino-acid chain; its full sequence is Glycine--tRNA ligase alpha subunit (299 aa).

Belongs to the class-II aminoacyl-tRNA synthetase family. Tetramer of two alpha and two beta subunits.

Its subcellular location is the cytoplasm. It catalyses the reaction tRNA(Gly) + glycine + ATP = glycyl-tRNA(Gly) + AMP + diphosphate. The polypeptide is Glycine--tRNA ligase alpha subunit (Pediococcus pentosaceus (strain ATCC 25745 / CCUG 21536 / LMG 10740 / 183-1w)).